An 85-amino-acid chain; its full sequence is Beta-defensin 18 (85 aa).

A signal peptide spans 1–23 (MQSTMKMFGIILMVIFSVSCGPS). 3 cysteine pairs are disulfide-bonded: Cys39–Cys65, Cys46–Cys60, and Cys50–Cys66.

This sequence belongs to the beta-defensin family.

It localises to the secreted. Functionally, has antibacterial activity. The sequence is that of Beta-defensin 18 (Defb18) from Mus musculus (Mouse).